Reading from the N-terminus, the 262-residue chain is Undecaprenyl-diphosphatase (262 aa).

The next 8 helical transmembrane spans lie at 15–35 (LTEWLPISSSGHLVLLQIILL), 38–58 (SSAAFIALVHAGTLLAVIVAF), 91–111 (LYILIGTVPVAVLGLALAKYV), 114–134 (IFGSSKIVGVGLLITAALLYS), 149–169 (ALIVGLAQSIAIFPGISRSGA), 189–209 (FLLSIPALTGFLILELIVSPA), 219–239 (VGLLSSFITGLIAIKFLLSII), and 242–262 (GRLHLFSYYCVIVGIAILSLL).

This sequence belongs to the UppP family.

The protein localises to the cell membrane. The catalysed reaction is di-trans,octa-cis-undecaprenyl diphosphate + H2O = di-trans,octa-cis-undecaprenyl phosphate + phosphate + H(+). Functionally, catalyzes the dephosphorylation of undecaprenyl diphosphate (UPP). The sequence is that of Undecaprenyl-diphosphatase from Korarchaeum cryptofilum (strain OPF8).